The following is a 401-amino-acid chain: Imidazolonepropionase (401 aa).

2 residues coordinate Fe(3+): H66 and H68. Residues H66 and H68 each coordinate Zn(2+). The 4-imidazolone-5-propanoate site is built by R75, Y138, and H171. Residue Y138 coordinates N-formimidoyl-L-glutamate. Fe(3+) is bound at residue H236. Position 236 (H236) interacts with Zn(2+). 4-imidazolone-5-propanoate is bound at residue Q239. D311 is a binding site for Fe(3+). Zn(2+) is bound at residue D311. N-formimidoyl-L-glutamate contacts are provided by N313 and G315. Residue T316 coordinates 4-imidazolone-5-propanoate.

It belongs to the metallo-dependent hydrolases superfamily. HutI family. Zn(2+) serves as cofactor. The cofactor is Fe(3+).

The protein localises to the cytoplasm. The enzyme catalyses 4-imidazolone-5-propanoate + H2O = N-formimidoyl-L-glutamate. It functions in the pathway amino-acid degradation; L-histidine degradation into L-glutamate; N-formimidoyl-L-glutamate from L-histidine: step 3/3. Catalyzes the hydrolytic cleavage of the carbon-nitrogen bond in imidazolone-5-propanoate to yield N-formimidoyl-L-glutamate. It is the third step in the universal histidine degradation pathway. The protein is Imidazolonepropionase of Acinetobacter baumannii (strain AB0057).